An 871-amino-acid polypeptide reads, in one-letter code: Nonsense-mediated mRNA decay factor SMG8 (871 aa).

Positions 541–596 are disordered; it reads LDDMELPESLQQSYTSSEDSSEDDDDFAIQTASSEDSLSGSDSYARPGSRRDEFES. Residues 573 to 583 are compositionally biased toward low complexity; sequence SSEDSLSGSDS.

It belongs to the SMG8 family.

Functionally, involved in nonsense-mediated decay (NMD) of mRNAs containing premature stop codons. Probable component of kinase complex containing smg-1 and recruited to stalled ribosomes. The protein is Nonsense-mediated mRNA decay factor SMG8 (smg-8) of Caenorhabditis briggsae.